Here is a 156-residue protein sequence, read N- to C-terminus: Small ribosomal subunit protein uS7c (156 aa).

This sequence belongs to the universal ribosomal protein uS7 family. As to quaternary structure, part of the 30S ribosomal subunit.

It is found in the plastid. Its subcellular location is the cyanelle. In terms of biological role, one of the primary rRNA binding proteins, it binds directly to 16S rRNA where it nucleates assembly of the head domain of the 30S subunit. The sequence is that of Small ribosomal subunit protein uS7c (rps7) from Cyanophora paradoxa.